We begin with the raw amino-acid sequence, 610 residues long: UvrABC system protein C (610 aa).

The 79-residue stretch at 16 to 94 (SQPGVYRMYD…IKLYQPRYNV (79 aa)) folds into the GIY-YIG domain. One can recognise a UVR domain in the interval 204–239 (DQVLTQLIARMEKASQDLAFEEAARIRDQIQAVRRV).

This sequence belongs to the UvrC family. In terms of assembly, interacts with UvrB in an incision complex.

The protein resides in the cytoplasm. Its function is as follows. The UvrABC repair system catalyzes the recognition and processing of DNA lesions. UvrC both incises the 5' and 3' sides of the lesion. The N-terminal half is responsible for the 3' incision and the C-terminal half is responsible for the 5' incision. This chain is UvrABC system protein C, found in Salmonella dublin (strain CT_02021853).